We begin with the raw amino-acid sequence, 253 residues long: Snake venom serine proteinase 14 (253 aa).

A signal peptide spans 1 to 18; that stretch reads MVLIRVLANLLILQLSYA. A propeptide spanning residues 19–24 is cleaved from the precursor; that stretch reads QKSSEL. Residues 25-244 form the Peptidase S1 domain; the sequence is VIGGDECNIN…YTDWIQSIIA (220 aa). 6 cysteine pairs are disulfide-bonded: Cys31-Cys158, Cys49-Cys65, Cys93-Cys251, Cys137-Cys205, Cys169-Cys184, and Cys195-Cys220. Catalysis depends on charge relay system residues His64 and Asp105. Residues Asn116, Asn117, and Asn149 are each glycosylated (N-linked (GlcNAc...) asparagine). Residue Ser199 is the Charge relay system of the active site.

The protein belongs to the peptidase S1 family. Snake venom subfamily. In terms of assembly, monomer. Expressed by the venom gland.

It is found in the secreted. In terms of biological role, snake venom serine protease that may act in the hemostasis system of the prey. The sequence is that of Snake venom serine proteinase 14 from Crotalus adamanteus (Eastern diamondback rattlesnake).